Here is a 152-residue protein sequence, read N- to C-terminus: Small ribosomal subunit protein bS6 (152 aa).

The disordered stretch occupies residues 96-152 (HEEGPSAMLQKRDRDDRGPREGGDRGPRREFGDRPPRRDGDFQRGPRPDRAPREDRA).

The protein belongs to the bacterial ribosomal protein bS6 family.

Functionally, binds together with bS18 to 16S ribosomal RNA. The protein is Small ribosomal subunit protein bS6 of Rhizobium etli (strain CIAT 652).